The chain runs to 61 residues: Small ribosomal subunit protein uS14B (61 aa).

Cys24, Cys27, Cys40, and Cys43 together coordinate Zn(2+).

It belongs to the universal ribosomal protein uS14 family. Zinc-binding uS14 subfamily. As to quaternary structure, part of the 30S ribosomal subunit. Contacts proteins S3 and S10. Zn(2+) is required as a cofactor.

Binds 16S rRNA, required for the assembly of 30S particles and may also be responsible for determining the conformation of the 16S rRNA at the A site. This is Small ribosomal subunit protein uS14B from Mycolicibacterium smegmatis (strain ATCC 700084 / mc(2)155) (Mycobacterium smegmatis).